Here is a 567-residue protein sequence, read N- to C-terminus: MVMEKLRKIHDLKKVHTTLEILQFARRGVIPSEAKRFRATWVVLDRNLKSEGKLCLQELNSNIVVVHRSNPKILRLNLKRRDLPYDEEESIDSSSVLLNGLSLSVMPKGFDQLYWESSTSSSEASSPDSRLVTAPKFELSVLEELLKNETRRKGPSPSEVLNSTTSSPASHKPQVLNDFLRMKESREYTEETDTQRNVSRPVDRVSSVRKQIHLRKQSSPQPPPLCSICQHKTPVFGKPPRKFTFAELQLATGGFSDVNFLAEGGYGSVYRGRLPDGQAVAVKQHKLASTQGDKEFCAEVEVLSCAQQRNLVMLIGYCAEDKKRLLVYEFVCNGSLDSHLYGRRSKTVGDFGLARWQPNGELGVETRVIGAFGYLAPEYTQTGQITEKADVYSFGIVLLELVSGRKAVDLSRNKGEMCLSEWARPFLREQKYEKLIDQRLRGRFCVNEVENMLLAATLCIDPDPLIRPRMSQVLRLLEGDSLSDTSLSSSSSGLLNGSPVSILLIGDLSQDSSSSRSSSASSVLKSFSRTQHSSRSSSNAGSPLNPAATQALAFKKYNKNTTRHTQD.

A disordered region spans residues 148–206; that stretch reads NETRRKGPSPSEVLNSTTSSPASHKPQVLNDFLRMKESREYTEETDTQRNVSRPVDRVS. Positions 159 to 169 are enriched in polar residues; the sequence is EVLNSTTSSPA. The segment covering 180–189 has biased composition (basic and acidic residues); it reads LRMKESREYT. Residues 196 to 206 are compositionally biased toward low complexity; the sequence is RNVSRPVDRVS. One can recognise a Protein kinase domain in the interval 255–487; it reads FSDVNFLAEG…EGDSLSDTSL (233 aa). Residues 261–269 and K283 contribute to the ATP site; that span reads LAEGGYGSV. Positions 511-538 are enriched in low complexity; it reads DSSSSRSSSASSVLKSFSRTQHSSRSSS. Residues 511–567 form a disordered region; sequence DSSSSRSSSASSVLKSFSRTQHSSRSSSNAGSPLNPAATQALAFKKYNKNTTRHTQD. Residues 556-567 are compositionally biased toward basic residues; the sequence is KYNKNTTRHTQD.

The chain is Inactive protein kinase SELMODRAFT_444075 from Selaginella moellendorffii (Spikemoss).